The chain runs to 301 residues: Phospholipase A1 VesT1.02 (301 aa).

Disulfide bonds link Cys87/Cys294, Cys176/Cys245, Cys181/Cys262, Cys219/Cys228, Cys240/Cys246, and Cys267/Cys269. Ser137 (nucleophile) is an active-site residue. Residue Asp165 is the Charge relay system of the active site. The Charge relay system role is filled by His230.

The protein belongs to the AB hydrolase superfamily. Lipase family. Post-translationally, is not glycosylated. Expressed by the venom gland.

It localises to the secreted. It carries out the reaction a 1,2-diacyl-sn-glycero-3-phosphocholine + H2O = a 2-acyl-sn-glycero-3-phosphocholine + a fatty acid + H(+). Its function is as follows. Catalyzes the hydrolysis of phosphatidylcholine with phospholipase A1 activity. Shows hemolytic activity. This chain is Phospholipase A1 VesT1.02, found in Vespa tropica (Greater banded hornet).